A 259-amino-acid polypeptide reads, in one-letter code: MNLLAKTRKLNTMLQQEASTHVDFKVMADRLSEVMESNTFIVSRRGKLLGIAIKQQIENARIRGFLEERQFPEDYTKKLFNVTETTANIAIDSEHTAFPIDNRDMFETSKTTIVPIIGGGERLGTLVLGRMLEDFNEEDLVLAEYGATVVGMEILREKAHEAEDKARKKAVVQMAINSLSYSELEAIEHIFEELDGNEGLLVASKIADRVGITRSVIVNALRKLESAGVIESRSLGMKGTYIKILNDNFLYELERIKSN.

Residues 1 to 155 (MNLLAKTRKL…GATVVGMEIL (155 aa)) form a GAF domain region. Positions 203 to 222 (ASKIADRVGITRSVIVNALR) form a DNA-binding region, H-T-H motif.

This sequence belongs to the CodY family.

It is found in the cytoplasm. In terms of biological role, DNA-binding global transcriptional regulator which is involved in the adaptive response to starvation and acts by directly or indirectly controlling the expression of numerous genes in response to nutrient availability. During rapid exponential growth, CodY is highly active and represses genes whose products allow adaptation to nutrient depletion. The chain is Global transcriptional regulator CodY from Exiguobacterium sibiricum (strain DSM 17290 / CCUG 55495 / CIP 109462 / JCM 13490 / 255-15).